The primary structure comprises 324 residues: Olfactory receptor 51D1 (324 aa).

At M1–F38 the chain is on the extracellular side. The helical transmembrane segment at W39–V59 threads the bilayer. Over L60–R67 the chain is Cytoplasmic. A helical membrane pass occupies residues L68–S88. Residues I89–A112 are Extracellular-facing. The cysteines at positions 110 and 202 are disulfide-linked. The chain crosses the membrane as a helical span at residues Q113 to F133. Residues D134–C152 are Cytoplasmic-facing. The chain crosses the membrane as a helical span at residues T153 to P173. At F174–V209 the chain is on the extracellular side. A helical membrane pass occupies residues V210 to S230. Topologically, residues Y231–A250 are cytoplasmic. A helical transmembrane segment spans residues F251–L271. The Extracellular segment spans residues S272–H285. A helical transmembrane segment spans residues V286–A306. Residues K307 to K324 lie on the Cytoplasmic side of the membrane.

It belongs to the G-protein coupled receptor 1 family.

The protein resides in the cell membrane. Functionally, odorant receptor. The chain is Olfactory receptor 51D1 (OR51D1) from Homo sapiens (Human).